The following is a 244-amino-acid chain: Small ribosomal subunit protein uS2 (244 aa).

This sequence belongs to the universal ribosomal protein uS2 family.

The polypeptide is Small ribosomal subunit protein uS2 (Desulforudis audaxviator (strain MP104C)).